Here is a 341-residue protein sequence, read N- to C-terminus: MKSVSTLGSHCSLQLLKGAKDEGFRTLLVCERRRERFYRRFGFIDELVLVDGFGELLGDECQSVLAENDSILIPHGTLVAQMSPDQIESIGVPVFGNKWILRWESDRSLKERLMREARLRMPRSIDSPGDIDTLVIVKRQGAAGGKGYFMANSEEEYESKRLSLIESGVISTDEDLYIQEYVPGVLAYLQFFYSPLKADIEFFGADQRHESDIEGLARIPAPVQMGSSGIPSFNVIGNSPLVLRESLLEGAYRMGEDFVEASSRLVAPGMNGPFCIEGVYGDDGRFTSFEFSARIVAGTNIYMNGSPYYGLLFDEPISMGRRIAREIKSAIAEERLDETVT.

Residues histidine 10 and threonine 77 each coordinate 5-amino-1-(5-phospho-beta-D-ribosyl)imidazole-4-carboxamide. The ATP-grasp domain occupies 106–317; it reads DRSLKERLMR…YYGLLFDEPI (212 aa). ATP-binding positions include 132-188 and glutamate 210; that span reads DTLV…VLAY. Asparagine 238 is a binding site for 5-amino-1-(5-phospho-beta-D-ribosyl)imidazole-4-carboxamide. Mg(2+) is bound by residues glutamate 277 and glutamate 290.

The protein belongs to the phosphohexose mutase family. It depends on Mg(2+) as a cofactor. Mn(2+) is required as a cofactor.

It catalyses the reaction 5-amino-1-(5-phospho-beta-D-ribosyl)imidazole-4-carboxamide + formate + ATP = 5-formamido-1-(5-phospho-D-ribosyl)imidazole-4-carboxamide + ADP + phosphate. It participates in purine metabolism; IMP biosynthesis via de novo pathway; 5-formamido-1-(5-phospho-D-ribosyl)imidazole-4-carboxamide from 5-amino-1-(5-phospho-D-ribosyl)imidazole-4-carboxamide (formate route): step 1/1. Functionally, catalyzes the ATP- and formate-dependent formylation of 5-aminoimidazole-4-carboxamide-1-beta-d-ribofuranosyl 5'-monophosphate (AICAR) to 5-formaminoimidazole-4-carboxamide-1-beta-d-ribofuranosyl 5'-monophosphate (FAICAR) in the absence of folates. The polypeptide is 5-formaminoimidazole-4-carboxamide-1-(beta)-D-ribofuranosyl 5'-monophosphate synthetase (Cenarchaeum symbiosum (strain A)).